The primary structure comprises 758 residues: G-protein alpha subunit activating protein gbas-1 (758 aa).

A compositionally biased stretch (acidic residues) spans 30-48 (LDEVDNADFEREDDEEEVL). The tract at residues 30–70 (LDEVDNADFEREDDEEEVLSEPSESPYTSTPKSSKRVNKTR) is disordered. The span at 49–61 (SEPSESPYTSTPK) shows a compositional bias: low complexity. Positions 653–666 (ETVTVEEFLMNSYS) match the GBA motif. The disordered stretch occupies residues 668 to 690 (AAPSTSTAPAPPKAPVTAPPAPQ). Pro residues predominate over residues 676-689 (PAPPKAPVTAPPAP).

Interacts (via GBA motif) with guanine nucleotide-binding protein G(o) subunit alpha goa-1 (in GDP-bound form); the interaction leads to activation of goa-1. In terms of tissue distribution, expressed in some neurons including the head and tail neurons, HSN and VC, in a subset of glial cells, in the distal tips cells and in the intestine.

In terms of biological role, acts as a non-receptor guanine nucleotide exchange factor which binds to and activates G-protein alpha subunit goa-1. The protein is G-protein alpha subunit activating protein gbas-1 of Caenorhabditis elegans.